Consider the following 266-residue polypeptide: F-actin-capping protein subunit alpha (266 aa).

This sequence belongs to the F-actin-capping protein alpha subunit family. In terms of assembly, heterodimer of an alpha and a beta subunit.

The protein localises to the cytoplasm. It is found in the cytoskeleton. In terms of biological role, F-actin-capping proteins bind in a Ca(2+)-independent manner to the fast growing ends of actin filaments (barbed end) thereby blocking the exchange of subunits at these ends. Unlike other capping proteins (such as gelsolin and severin), these proteins do not sever actin filaments. The polypeptide is F-actin-capping protein subunit alpha (CAP1) (Debaryomyces hansenii (strain ATCC 36239 / CBS 767 / BCRC 21394 / JCM 1990 / NBRC 0083 / IGC 2968) (Yeast)).